A 108-amino-acid chain; its full sequence is uncharacterized protein (108 aa).

The interval 74–108 (TGSKKRDSKANSRSRPSGTITSRGARIGLQGYKSH) is disordered. Residues 84–95 (NSRSRPSGTITS) are compositionally biased toward polar residues.

This is an uncharacterized protein from Saccharomyces cerevisiae (strain ATCC 204508 / S288c) (Baker's yeast).